The following is a 467-amino-acid chain: 3-isopropylmalate dehydratase large subunit (467 aa).

Residues C347, C407, and C410 each contribute to the [4Fe-4S] cluster site.

It belongs to the aconitase/IPM isomerase family. LeuC type 1 subfamily. In terms of assembly, heterodimer of LeuC and LeuD. [4Fe-4S] cluster is required as a cofactor.

It catalyses the reaction (2R,3S)-3-isopropylmalate = (2S)-2-isopropylmalate. It participates in amino-acid biosynthesis; L-leucine biosynthesis; L-leucine from 3-methyl-2-oxobutanoate: step 2/4. Catalyzes the isomerization between 2-isopropylmalate and 3-isopropylmalate, via the formation of 2-isopropylmaleate. The sequence is that of 3-isopropylmalate dehydratase large subunit from Pelagibacter ubique (strain HTCC1062).